The chain runs to 716 residues: ATP-dependent DNA helicase DinG (716 aa).

Positions 17–294 constitute a Helicase ATP-binding domain; it reads ALQEQIPDFI…TCMEQFRPKT (278 aa). 54–61 is a binding site for ATP; the sequence is APTGVGKT. Cysteine 120 provides a ligand contact to [4Fe-4S] cluster. Residues 131 to 134 carry the DEAH box motif; it reads EPTQ. [4Fe-4S] cluster-binding residues include cysteine 194, cysteine 199, and cysteine 205. Residues 248–251 carry the DEAH box motif; the sequence is DEGH. The Helicase C-terminal domain maps to 487–698; sequence ALDSPFNHCE…VFPIEQPEVP (212 aa).

The protein belongs to the helicase family. DinG subfamily. Type 1 sub-subfamily. [4Fe-4S] cluster serves as cofactor.

The catalysed reaction is Couples ATP hydrolysis with the unwinding of duplex DNA at the replication fork by translocating in the 5'-3' direction. This creates two antiparallel DNA single strands (ssDNA). The leading ssDNA polymer is the template for DNA polymerase III holoenzyme which synthesizes a continuous strand.. The enzyme catalyses ATP + H2O = ADP + phosphate + H(+). DNA-dependent ATPase and 5'-3' DNA helicase. Unwinds D-loops, R-loops, forked DNA and G-quadruplex DNA. The polypeptide is ATP-dependent DNA helicase DinG (Shigella flexneri).